Consider the following 12345-residue polypeptide: Muscle-specific protein 300 kDa (12345 aa).

Disordered stretches follow at residues 1–68 (MADS…STVT) and 121–152 (WSDGSSPVKRPAEQSSDELRLTDDQDEYDAEN). Topologically, residues 1–12295 (MADSGGPGSK…GARFLGRVAR (12295 aa)) are cytoplasmic. The span at 19–28 (AGGGGAGAAG) shows a compositional bias: gly residues. The span at 45 to 60 (EQKSSREQVLEEEKSQ) shows a compositional bias: basic and acidic residues. One copy of the LRR 1 repeat lies at 249 to 273 (FKELENFLEGERTVREVPSADGVRT). Disordered regions lie at residues 295-325 (EGYVSPRDSPSWSRSSYSSERSSVTPPRSVD), 387-488 (TVQV…RKLI), and 504-526 (GKSNASDNDIDIDNDSDTEGRPA). Low complexity predominate over residues 299 to 321 (SPRDSPSWSRSSYSSERSSVTPP). 2 stretches are compositionally biased toward polar residues: residues 387-404 (TVQVGGGNRTSPQDSTPQ) and 414-434 (TTKTMLTSTPIGTKEQPQTGP). Positions 462–484 (TITSTTTKSTSSSTSATSSSSTS) are enriched in low complexity. Over residues 511-520 (NDIDIDNDSD) the composition is skewed to acidic residues. Calponin-homology (CH) domains are found at residues 630-737 (RVQK…LYFQ) and 777-882 (QGAR…HKYP). The stretch at 823-847 (LVNLAELKKTSNRQRLETAFDVAES) is one LRR 2 repeat. A TPR 1 repeat occupies 919 to 952 (SSFPRDFGEYLLARSEVDAHLAAYNRLKQLIESQ). LRR repeat units follow at residues 1089–1112 (CCLIAFLNLVENKMRGWTGKYGHE), 1389–1411 (HLFHQLQIQQESLEAGQKEIHQW), and 1616–1642 (LKDVEKELQLEQQALNRNEDVDSILQR). A TPR 2 repeat occupies 1603–1636 (LEFRLDENAFYQSLKDVEKELQLEQQALNRNEDV). Residues 1903–1935 (TGWNQAYTETSDKLQALKGTQAVWSEFVDQKND) form an HAT 1 repeat. 2 LRR repeats span residues 2087–2109 (KQLDLLAADASELAPKEGNIAEA) and 2558–2581 (QQQIQQMTVRKDKFHALEHNFGQA). One can recognise a Calponin-homology (CH) 3 domain in the interval 2109–2233 (AKRLKGEITK…SRWTAVHENA (125 aa)). The TPR 3 repeat unit spans residues 2663 to 2696 (ADRIQKYNLISQALREYADSKDKFSKELKKAEDL). Residues 2699–2724 (AIPQQPRDETELHQASEKTRKTMEQL) form a disordered region. A compositionally biased stretch (basic and acidic residues) spans 2704–2724 (PRDETELHQASEKTRKTMEQL). LRR repeat units lie at residues 2728–2751 (KLSLDELERRGNNVGKLFSAIGEP), 2935–2959 (CRALRGELDNSGNEIDNIKQKVDEL), and 3030–3053 (SSDKYNLDVKKSSLQEVSKSIDDC). Positions 2894 to 2962 (EQELRRRSKE…KQKVDELRNL (69 aa)) form a coiled coil. The stretch at 3110-3207 (LWSQYEQSNE…AVSKALTSYI (98 aa)) is one Spectrin 1 repeat. One copy of the TPR 4 repeat lies at 3346–3379 (KAKVPTTDELYPTLATKKAALQNYKTQLQEITLH). LRR repeat units lie at residues 3370–3393 (KTQLQEITLHKNALKQLHDKAVTL), 3437–3462 (LEKAQDWLNTIKSEAIDILNETTFEK), 3530–3556 (LVKLKQLCSKWDEFDTIIEELDNWMKN), and 3611–3634 (NLKLSRLNTRYQTLKNLCKESIAK). A Spectrin 2 repeat occupies 3539 to 3633 (KWDEFDTIIE…LKNLCKESIA (95 aa)). The TPR 5 repeat unit spans residues 3629–3662 (KESIAKYVNYVKDHESFDKDFDSFKQNLQSSVDE). Residues 3706 to 3739 (KLYGHTSPEGREIIRQQLRALRTLWDNYTDDLNS) form an HAT 2 repeat. The LRR 15 repeat unit spans residues 3748-3771 (LLQFNEFSIAQDQLTKWLKDVDKA). A Spectrin 3 repeat occupies 4177-4273 (SYQDILNQTV…YDQVGQDCAK (97 aa)). Residues 4360–4393 (EVMARDLANLHADFEKFGASLSDVKSGLENRLQQ) form a TPR 6 repeat. An HAT 3 repeat occupies 4371–4403 (ADFEKFGASLSDVKSGLENRLQQWNDYEINLDR). The stretch at 4611-4701 (FDEIADSLKS…GKLQKRAQNY (91 aa)) is one Spectrin 4 repeat. LRR repeat units lie at residues 4654-4676 (NDINNHQVELGNLQEIAANLPEK) and 4742-4763 (EQISLHTNLDRLKNLKASLADE). Residues 4799–4830 (EWESLLTTISSTIEAIEARLQHWSEYEQLRDQ) form an HAT 4 repeat. The stretch at 4820 to 4919 (HWSEYEQLRD…VKELNNRWQQ (100 aa)) is one Spectrin 5 repeat. An LRR 18 repeat occupies 4839-4863 (DNNLHAIDLKEDLPKKRAQLDALKA). The stretch at 4894–4926 (ASGPELVTKYQQIFHKVKELNNRWQQYVTSHED) is one HAT 5 repeat. LRR repeat units follow at residues 5266 to 5289 (QIDILVKNHKLNLCPNLPEKEKQV) and 5333 to 5357 (SSVYQVQVNLAKDVLKKVETNRDQH). The TPR 7 repeat unit spans residues 5645–5678 (SAEPEDCEIIEQEVALLQEEFDAYREALNKAKDY). LRR repeat units lie at residues 5761–5784 (SNAIMQLTTKYNALLTLAKEVMRR), 5820–5843 (PGTLNEVQIKLNTVKNLRQGFETG), and 5979–6002 (TKFDDLQTQVNKIIESLENQVNSH). The Spectrin 6 repeat unit spans residues 5791 to 5895 (EHQQHHSLYE…DLNDVRQKLA (105 aa)). Residues 6088-6120 (SEWETLQTISRDARSSLESCLAAWQTFLQKFNK) form an HAT 6 repeat. Spectrin repeat units follow at residues 6321–6405 (RWND…DKLK) and 6424–6530 (AYHQ…RLLE). Coiled coils occupy residues 6356–6397 (MKTL…VNRL) and 6454–6484 (REQTQEQIKQHEALLVEIQKYQTNLDDLNAK). One copy of the LRR 24 repeat lies at 6363 to 6387 (YKTLSNELKLKGNELEQLQSEARDL). A TPR 8 repeat occupies 6522-6555 (VQIKNRLLESLAKFQEYEDTLDSIMRNLETYEPI). LRR repeat units follow at residues 6531-6554 (SLAKFQEYEDTLDSIMRNLETYEP) and 6560-6587 (LDAPATSLELAQNQLRCAQEMQNKLNNE). Positions 6567-6597 (LELAQNQLRCAQEMQNKLNNEKSRLAAAVQA) form a coiled coil. The tract at residues 6631–6657 (EDLLDQKPPPKTRSSTGGVSTDDDKDE) is disordered. One copy of the TPR 9 repeat lies at 6660–6695 (VEIQVELSDVNEALLDPIAHERVKNYRRIVRLNSAH). One copy of the LRR 27 repeat lies at 7004–7026 (SALRNLNTENRNLSGVLKAELDR). The stretch at 7161-7195 (EMETATEGELRTTSLPVLEEQLAHYKKLLSDAENK) is one TPR 10 repeat. LRR repeat units lie at residues 7219 to 7242 (LKLNDDIKNMKDRYGRIKNTIDDR), 7300 to 7318 (KELKDSKSKMGDMQMDDLP), 7319 to 7339 (ELQSILAQQDDMIKLIEDQLA), and 7340 to 7361 (HLRQLLLLREQFIALINEIIAF). Residues 7419–7457 (KNSITEQLQSLKNQLQNLRKAVESQRQKHQLQLESHKKM) are a coiled coil. The LRR 32 repeat unit spans residues 7524–7547 (SSLLEMLSEGRSLVASLPHELEER). One copy of the HAT 7 repeat lies at 7644–7676 (TKLTNTLANAKTQQSELEKEAERWREYQQSIDR). The stretch at 7654–7687 (KTQQSELEKEAERWREYQQSIDRVKATIERTKFV) is one TPR 11 repeat. LRR repeat units follow at residues 7692–7714 (QNLAGLHFNIQKLSHAIGNVQSQ), 7752–7777 (QDLVRSLEQRRDNLQQLAEHWDGFEN), and 7816–7840 (LREESNQLKSSHKEIEALSKSILTF). The stretch at 7759–7792 (EQRRDNLQQLAEHWDGFENSLHAWEKALGRLEDK) is one TPR 12 repeat. Residues 7799 to 7935 (TVRSRRHLED…NSQVQQAAEE (137 aa)) are a coiled coil. Residues 7878–7911 (SKDLEEIEQVFRRISQLQDKLNALHEQLQSVHVY) form a TPR 13 repeat. 4 LRR repeats span residues 8178–8201 (KISVEAVLLERNSLLQEACEEWDQ), 8238–8264 (EKTLADINVQKTKLRLSIEKLEVHFRN), 8298–8321 (EQTLAQIDVYQQQMQSLRQRIIQE), and 8354–8377 (DELLQSLSSVEDGIANMNQSSLDG). One copy of the TPR 14 repeat lies at 8431 to 8464 (QQGITMIANAMHGQKKRQQEIDEYQQHLLELEQW). Residues 8534–8557 (EQLQSIITILREQVTVATKRIFTI) form an LRR 40 repeat. Disordered stretches follow at residues 8583–8616 (IKPPTEAPASPEAHESIESNENTIDSSSMPEEEI), 8966–9023 (QKPT…LPAP), 9131–9158 (EFEPQSPHEESTKSDLVKPQETEPQVVA), 9361–9459 (GKES…PDSD), 9502–9735 (LVED…TSIS), and 9769–9797 (TMQLPKQEKKSKKDKKKKQKNVPEVEQQL). Over residues 8601–8611 (SNENTIDSSSM) the composition is skewed to polar residues. Positions 8982 to 9011 (TQVTTTTRTTTATTQEQEQPEQQTQPTTTE) are enriched in low complexity. Over residues 9136–9151 (SPHEESTKSDLVKPQE) the composition is skewed to basic and acidic residues. Basic residues predominate over residues 9394–9404 (KRRRKKKKRRD). Residues 9410–9419 (ELEQEQETEP) show a composition bias toward acidic residues. Low complexity predominate over residues 9420–9439 (EPVAAVKEPEVSSDVPVSPE). Over residues 9440 to 9451 (DSPRDTVRHESI) the composition is skewed to basic and acidic residues. Polar residues-rich tracts occupy residues 9544–9563 (AVQTSLEVQPDNQENESQTL), 9587–9597 (ISTTEIQTDVS), and 9605–9625 (EISSQTTVTTTIEKELQTTPK). Over residues 9658–9680 (TSEQSTVTETTTTTETHVQTTTP) the composition is skewed to low complexity. The segment covering 9681-9698 (EPREQTEVIKPETAHEET) has biased composition (basic and acidic residues). An LRR 41 repeat occupies 9699-9721 (STVELVQFADGEMQTTPPGDQQP). Positions 9711–9735 (MQTTPPGDQQPASLDDSSLTATSIS) are enriched in polar residues. Positions 9777–9788 (KKSKKDKKKKQK) are enriched in basic residues. 4 LRR repeats span residues 9995 to 10019 (SNVLHLATLSEQIKELPTEQRILEV), 10073 to 10096 (EEKLDNYNQLNDELSTIKQNVVQL), 10252 to 10276 (KEFTKITVLADKLVESPIVSSSLEQ), and 10353 to 10376 (RDELQWLQVAQQRVPDLSAVTSAD). Coiled coils occupy residues 10072 to 10099 (SEEKLDNYNQLNDELSTIKQNVVQLERQ) and 10172 to 10257 (LSAK…FTKI). Residues 10231 to 10264 (QAERERVLQLQSLAEEYEQTLKEFTKITVLADKL) form a TPR 15 repeat. Residues 10426 to 10458 (IVLLKLREEVALYLHRLLVFKEIWVQYEQQTDK) form an HAT 8 repeat. LRR repeat units follow at residues 10512 to 10535 (EKSLQVIPLADEMLQRQFHAQLED), 10570 to 10593 (ERELQEIYLTMTSMKGVIKNEEEL), and 10644 to 10667 (AEELEGASVLRDQLQAIQEGISNQ). One copy of the TPR 16 repeat lies at 10854-10888 (VVAWNDTSENLQQLRTRYQRAVELWDKYRNASAAV). An HAT 9 repeat occupies 10855-10887 (VAWNDTSENLQQLRTRYQRAVELWDKYRNASAA). LRR repeat units follow at residues 10907–10929 (DALQHAKVCQDNLTTQNDRILEL) and 11021–11043 (AHLQTLARTEEQLRQLKERHQNS). Residues 11016–11046 (LAALRAHLQTLARTEEQLRQLKERHQNSEVA) adopt a coiled-coil conformation. The stretch at 11070 to 11104 (DTFQEYHRLSTRLARSQNSSEALRLWRQYLQHVQS) is one HAT 10 repeat. Residues 11072-11105 (FQEYHRLSTRLARSQNSSEALRLWRQYLQHVQSF) form a TPR 17 repeat. One copy of the LRR 51 repeat lies at 11197 to 11222 (EAERNALQLRYIHLKRVPHLKHRLDA). Coiled coils occupy residues 11220 to 11247 (LDAMIQQLDQGEQQSKALQEQQQELARH) and 11281 to 11308 (LQRVTQLSESYEQRVNQLQQEFGAAQKL). 5 LRR repeats span residues 11342-11365 (SALESLTVTQEELKECISPHDMKT), 11398-11422 (LSNYQIRYDRISQWLQRLEQRVEKD), 11670-11692 (EELESQSVNLRQLEQIYAKLAMS), 11697-11720 (PENIQKLTLPTKVMVSMWRQLTPR), and 11744-11766 (EATNSLNAIQKALEQLPSAENQQ). The stretch at 11655–11685 (KHKLEERQMELRAKLEELESQSVNLRQLEQI) forms a coiled coil. A coiled-coil region spans residues 11776–11806 (LQRLESLEKKLQDAQQHVQQADNLAQEAKTR). Residues 11804-11836 (KTRTKQQPQLKQLLELVSAYTTLWQTVQTRIVT) form an HAT 11 repeat. LRR repeat units lie at residues 11959-11981 (DTVAELTLRFDTLQSQWKARQQH) and 12198-12220 (SRLTDLRLRLQSLRRLSGIYIVK). Residues 12253 to 12272 (SMQAAAPNTENANNTDGGDA) form a disordered region. Residues 12256–12267 (AAAPNTENANNT) are compositionally biased toward low complexity. The 59-residue stretch at 12287–12345 (ARFLGRVARASLPIQALMLLLLGVATLVPHGEDYTCMFSNTFARSLEPMLSYPHGPPPT) folds into the KASH domain. Residues 12296-12316 (ASLPIQALMLLLLGVATLVPH) traverse the membrane as a helical; Anchor for type IV membrane protein segment. One copy of the LRR 59 repeat lies at 12301 to 12323 (QALMLLLLGVATLVPHGEDYTCM). At 12317-12345 (GEDYTCMFSNTFARSLEPMLSYPHGPPPT) the chain is on the perinuclear space side.

Belongs to the nesprin family. Core component of LINC complexes which are composed of inner nuclear membrane SUN domain-containing proteins coupled to outer nuclear membrane KASH domain-containing nesprins. Interacts with klar; this interaction allows the anchoring of the Msp300 nuclear ring structure to the nuclear envelope. Interacts with sls; this interaction mediates the recruitment of Msp300 to the Z-disks.

It is found in the nucleus membrane. It localises to the cytoplasm. The protein resides in the myofibril. Its subcellular location is the sarcomere. The protein localises to the z line. It is found in the cytoskeleton. It localises to the microtubule organizing center. The protein resides in the perinuclear region. Functionally, component of the LINC (LInker of Nucleoskeleton and Cytoskeleton) complex involved in the connection between the nuclear lamina and the cytoskeleton. Collaborates with Klar to promote even spacing of the myonuclei at the periphery of striated muscle fibers by mediating a tight association between a nuclear ring structure of Msp300 and the plus ends of a unique astral MT network. In addition, is essential for anchoring nuclei, mitochondria and endoplasmic reticulum (ER) structures to the Z-disks. In fat body cells, part of perinuclear non-centrosomal microtubule-organizing centers (ncMTOCs) which function to accommodate the organization of microtubule (MT) networks to control nuclear positioning and dynein motor-based retrograde endosomal trafficking. Functions as the primary organizer of the ncMTOC by recruiting Patronin, shot and msps to the organizing centre. Within the ncMTOC, Msp300 and shot anchors the ncMTOC at the nuclear surface and recruits the MT minus-end regulators Patronin and Nin for assembly, anchoring and/or stabilization of circumferential and radial MTs at the ncMTOCs. Patronin, and perhaps Nin, recruits msps to the ncMTOC for the gamma-tubulin-independent elongation of radial MTs. The sequence is that of Muscle-specific protein 300 kDa from Drosophila melanogaster (Fruit fly).